The following is a 293-amino-acid chain: MPELPEVETVRRGLQPVMEGAKIVVAEARRPDLRFPFQPDFVARLQGQVVTGLGRRAKYLMADLASGDVLLMHLGMSGSFRVIKPDNDAAPGEFHYPRGKDTTHDHVLFRMSSGADIVFNDPRRFGYMKVIARNALEDEPLLRGLGPEPLGNEFDAAMLARSCEGKATSLKAALLDQRVVAGLGNIYVCEALHRSHLSPRRIAATLATRKGEPTDHAKRLVGAIHTVLNDAIKAGGSSLRDHRQTTGELGYFQHSFKVYDREGETCKTPACGGTIKRFTQNGRSTFWCPKCQK.

Pro2 acts as the Schiff-base intermediate with DNA in catalysis. Glu3 acts as the Proton donor in catalysis. The active-site Proton donor; for beta-elimination activity is the Lys58. The DNA site is built by His104, Arg123, and Lys166. The FPG-type zinc finger occupies 257–293; sequence KVYDREGETCKTPACGGTIKRFTQNGRSTFWCPKCQK. Arg283 serves as the catalytic Proton donor; for delta-elimination activity.

It belongs to the FPG family. Monomer. Zn(2+) is required as a cofactor.

The catalysed reaction is Hydrolysis of DNA containing ring-opened 7-methylguanine residues, releasing 2,6-diamino-4-hydroxy-5-(N-methyl)formamidopyrimidine.. The enzyme catalyses 2'-deoxyribonucleotide-(2'-deoxyribose 5'-phosphate)-2'-deoxyribonucleotide-DNA = a 3'-end 2'-deoxyribonucleotide-(2,3-dehydro-2,3-deoxyribose 5'-phosphate)-DNA + a 5'-end 5'-phospho-2'-deoxyribonucleoside-DNA + H(+). Involved in base excision repair of DNA damaged by oxidation or by mutagenic agents. Acts as a DNA glycosylase that recognizes and removes damaged bases. Has a preference for oxidized purines, such as 7,8-dihydro-8-oxoguanine (8-oxoG). Has AP (apurinic/apyrimidinic) lyase activity and introduces nicks in the DNA strand. Cleaves the DNA backbone by beta-delta elimination to generate a single-strand break at the site of the removed base with both 3'- and 5'-phosphates. The sequence is that of Formamidopyrimidine-DNA glycosylase from Bradyrhizobium diazoefficiens (strain JCM 10833 / BCRC 13528 / IAM 13628 / NBRC 14792 / USDA 110).